The primary structure comprises 525 residues: D-arabinono-1,4-lactone oxidase (525 aa).

The FAD-binding PCMH-type domain occupies 23 to 197 (YSCRPQLYFQ…VKATIRVIPE (175 aa)). At His60 the chain carries Pros-8alpha-FAD histidine.

This sequence belongs to the oxygen-dependent FAD-linked oxidoreductase family. FAD serves as cofactor.

It is found in the mitochondrion membrane. It carries out the reaction D-arabinono-1,4-lactone + O2 = dehydro-D-arabinono-1,4-lactone + H2O2 + H(+). It participates in cofactor biosynthesis; D-erythroascorbate biosynthesis; dehydro-D-arabinono-1,4-lactone from D-arabinose: step 2/2. The protein is D-arabinono-1,4-lactone oxidase (ALO1) of Kluyveromyces lactis (strain ATCC 8585 / CBS 2359 / DSM 70799 / NBRC 1267 / NRRL Y-1140 / WM37) (Yeast).